The chain runs to 358 residues: Feruloyl CoA ortho-hydroxylase F6H1-1 (358 aa).

Residues 200–308 (TKESLLMGSK…RISVPIFVNP (109 aa)) form the Fe2OG dioxygenase domain. Tyrosine 216 provides a ligand contact to 2-oxoglutarate. Fe cation is bound by residues histidine 231, aspartate 233, and histidine 289. 2 residues coordinate 2-oxoglutarate: arginine 299 and serine 301.

The protein belongs to the iron/ascorbate-dependent oxidoreductase family. L-ascorbate serves as cofactor. The cofactor is Fe(2+).

It catalyses the reaction (E)-feruloyl-CoA + 2-oxoglutarate + O2 = (E)-6-hydroxyferuloyl-CoA + succinate + CO2. It functions in the pathway phenylpropanoid metabolism. 2-oxoglutarate (OG)- and Fe(II)-dependent dioxygenase (2OGD) involved in scopoletin biosynthesis. Converts feruloyl CoA into 6'-hydroxyferuloyl CoA. This Ipomoea batatas (Sweet potato) protein is Feruloyl CoA ortho-hydroxylase F6H1-1.